A 162-amino-acid polypeptide reads, in one-letter code: Ribosome-binding factor A (162 aa).

The interval 124-162 (ARVRSGAKPAGEADPYRESGSGVEPGRDGSIGDDDQPEY) is disordered.

It belongs to the RbfA family. As to quaternary structure, monomer. Binds 30S ribosomal subunits, but not 50S ribosomal subunits or 70S ribosomes.

It localises to the cytoplasm. Its function is as follows. One of several proteins that assist in the late maturation steps of the functional core of the 30S ribosomal subunit. Associates with free 30S ribosomal subunits (but not with 30S subunits that are part of 70S ribosomes or polysomes). Required for efficient processing of 16S rRNA. May interact with the 5'-terminal helix region of 16S rRNA. The sequence is that of Ribosome-binding factor A from Mycolicibacterium paratuberculosis (strain ATCC BAA-968 / K-10) (Mycobacterium paratuberculosis).